Consider the following 398-residue polypeptide: Phosphoglycerate kinase (398 aa).

Residues 23-25 (DFN), R38, 61-64 (HMGK), R122, and R155 contribute to the substrate site. ATP contacts are provided by residues K206, G297, E328, and 354-357 (GGDS).

It belongs to the phosphoglycerate kinase family. In terms of assembly, monomer.

It localises to the cytoplasm. It catalyses the reaction (2R)-3-phosphoglycerate + ATP = (2R)-3-phospho-glyceroyl phosphate + ADP. It functions in the pathway carbohydrate degradation; glycolysis; pyruvate from D-glyceraldehyde 3-phosphate: step 2/5. This is Phosphoglycerate kinase from Clostridium botulinum (strain Langeland / NCTC 10281 / Type F).